The sequence spans 263 residues: Achaete-scute homolog 2 (263 aa).

2 disordered regions span residues 104-126 and 194-248; these read RRRR…RNER and PPSD…ELSP. 3 stretches are compositionally biased toward low complexity: residues 110–121, 202–220, and 230–247; these read ATEASSSSAAVA, PSAS…SPSP, and SPRS…GELS. Positions 118 to 170 constitute a bHLH domain; the sequence is AAVARRNERERNRVKLVNLGFQALRQHVPHGGANKKLSKVETLRSAVEYIRAL.

In terms of assembly, efficient DNA binding requires dimerization with another basic helix-loop-helix (bHLH) protein. Forms heterodimers with bHLH transcription factor TCF3. May not heterodimerise with bHLH protein HAND1. In terms of tissue distribution, expressed in follicular T-helper (Tfh) cells.

It is found in the nucleus. In terms of biological role, transcription factor. Binds to E-box motifs 5'-CANNTG-3' in the regulatory elements of target genes, probably as a heterodimer with another basic helix-loop-helix (bHLH) protein such as the transcription factor TCF3. May bind both open and closed chromatin, acting as a pioneer transcription factor to allow other factors to bind and activate lineage-specific genes. Required during post-implantation development for the generation of some differentiated trophoblast cell types. Transcriptional activity of ASCL2 may be antagonised in a subset of trophoblast cells by bHLH transcription factor HAND1, perhaps by competing for dimerization with other bHLH proteins. Involved in differentiation and function of follicular T-helper (Tfh) cells, thereby playing a role in germinal center responses; probably modulates expression of genes involved in Tfh cell function, such as BCL6. May also act as a suppressor of Th1-, Th2- and Th17-cell differentiation. Induces the formation of stem cells in intestinal crypts in vitro, synergistically activating transcription of target genes, such as SOX9, together with TCF4/beta-catenin. May form a bistable transcriptional switch, controlling expression of its own gene together with Wnt/R-spondin signaling, and thereby maintaining stem cell characteristics. Modulates expression of target genes, including perhaps down-regulating EGR1/Krox24 and chemokine CXCL10/Mob-1 and up-regulating CXCR4 and CDKN1C/p57kip2, in Schwann cells. May play a role in reducing proliferation of Schwann cells, perhaps acting via modulation of expression of CDKN1C. May be dispensable for blastocyst formation and later embryonic function. May be involved in the determination of neuronal precursors. The chain is Achaete-scute homolog 2 (Ascl2) from Mus musculus (Mouse).